Here is a 202-residue protein sequence, read N- to C-terminus: Recoverin (202 aa).

Residue Gly-2 is the site of N-myristoyl glycine attachment. EF-hand domains are found at residues 24 to 59 (TEEELSSWYQSFLKECPSGRITRQEFQTIYSKFFPE), 61 to 96 (DPKAYAQHVFRSFDANSDGTLDFKEYVIALHMTSAG), 97 to 132 (KTNQKLEWAFSLYDVDGNGTISKNEVLEIVTAIFKM), and 147 to 182 (TPEKRAEKIWGFFGKKDDDKLTEKEFIEGTLANKEI). Cys-39 is subject to Cysteine sulfenic acid (-SOH). Residues Asp-74, Asn-76, Asp-78, Thr-80, Glu-85, Asp-110, Asp-112, Asn-114, Thr-116, and Glu-121 each contribute to the Ca(2+) site. Residues 189–192 (EPQK) form an interaction with GRK1 region. The segment at 191 to 202 (QKVKEKLKEKKL) is modulates EF-hand 3 domain calcium binding affinity.

Belongs to the recoverin family. Homodimer; disulfide-linked. Homodimerization is caused by prolonged intense illumination. May form a complex composed of RHO, GRK1 and RCVRN in a Ca(2+)-dependent manner; RCVRN prevents the interaction between GRK1 and RHO. Interacts (via C-terminus) with GRK1 (via N-terminus); the interaction is Ca(2+)-dependent. Post-translationally, the N-terminal glycine is linked to one of four different types of acyl groups. The most abundant is myristoleate (14:1), but 14:0, 14:2, and 12:0 acyl residues are also present. The Ca(2+) induced exposure of the myristoyl group, known as the calcium-myristoyl switch, promotes RCVRN binding to the photoreceptor cell membranes only when intracellular Ca(2+) concentration is high. In terms of processing, oxidation on Cys-39 occurs in response to prolonged intense illumination and results in the formation of disulfide homodimers, and to a lesser extent disulfide-linked heterodimers. Expressed in the retina (at protein level). Expressed in the pineal gland (at protein level).

The protein resides in the photoreceptor inner segment. It is found in the cell projection. It localises to the cilium. Its subcellular location is the photoreceptor outer segment. The protein localises to the photoreceptor outer segment membrane. The protein resides in the perikaryon. Its function is as follows. Acts as a calcium sensor and regulates phototransduction of cone and rod photoreceptor cells. Modulates light sensitivity of cone photoreceptor in dark and dim conditions. In response to high Ca(2+) levels induced by low light levels, prolongs RHO/rhodopsin activation in rod photoreceptor cells by binding to and inhibiting GRK1-mediated phosphorylation of RHO/rhodopsin. Plays a role in scotopic vision/enhances vision in dim light by enhancing signal transfer between rod photoreceptors and rod bipolar cells. Improves rod photoreceptor sensitivity in dim light and mediates response of rod photoreceptors to facilitate detection of change and motion in bright light. The polypeptide is Recoverin (RCVRN) (Bos taurus (Bovine)).